The primary structure comprises 59 residues: MAFDKKLLDIVACPVCKGKLEYDKTAQQLICKADKLAYPITEGIPVLLENRATPITETV.

The protein belongs to the UPF0434 family.

In Shewanella sp. (strain W3-18-1), this protein is UPF0434 protein Sputw3181_2540.